The sequence spans 196 residues: Cupin-domain-containing oxidoreductase srdB (196 aa).

The Cupin type-2 domain occupies 92-156; sequence DFAPGCKSNM…TSDEKPARML (65 aa).

It belongs to the virC family.

Its function is as follows. Cupin-domain-containing oxidoreductase; part of the gene cluster that mediates the biosynthesis of sordarial, a salicylic aldehyde structurally related to the phytotoxin pyriculol. The most interesting aspect of this pathway is formation of an aromatic product from the highly reducing polyketide synthase srdA. SrdA synthesizes a reduced polyketide chain from one molecule of acetyl-CoA and five molecules of malonyl-CoA. The polyketide chain is then reductively released as an aldehyde. The oxidoreductases srdC, srdD and srdE then oxidize one of the hydroxy groups to facilitate the intramolecular aldol condensation, followed by dehydration to yield a salicylic aldehyde. This aldehyde can undergo facile reduction by endogenous reductases to yield the alcohol 1-hydroxy-2-hydroxymethyl-3-pent-1,3-dienylbenzene. The flavin-dependent srdI counteract against the propensity of the aldehydes to be reduced under physiological conditions and is responsible for reoxidizing 1-hydroxy-2-hydroxymethyl-3-pent-1,3-dienylbenzene back to the salicylic aldehyde. This salicylic aldehyde is then selectively epoxidized by the cupin-domain-containing oxidoreductase srdB to yield the epoxide, which can be hydrolyzed stereoselectively by the hydrolase srdG to give the final product sordarial. The protein is Cupin-domain-containing oxidoreductase srdB of Neurospora crassa (strain ATCC 24698 / 74-OR23-1A / CBS 708.71 / DSM 1257 / FGSC 987).